A 388-amino-acid polypeptide reads, in one-letter code: 3-ketoacyl-CoA thiolase (388 aa).

Cys-91 (acyl-thioester intermediate) is an active-site residue. Catalysis depends on proton acceptor residues His-343 and Cys-373.

It belongs to the thiolase-like superfamily. Thiolase family. Heterotetramer of two alpha chains (FadB) and two beta chains (FadA).

The protein resides in the cytoplasm. The catalysed reaction is an acyl-CoA + acetyl-CoA = a 3-oxoacyl-CoA + CoA. Its pathway is lipid metabolism; fatty acid beta-oxidation. Catalyzes the final step of fatty acid oxidation in which acetyl-CoA is released and the CoA ester of a fatty acid two carbons shorter is formed. This Photorhabdus laumondii subsp. laumondii (strain DSM 15139 / CIP 105565 / TT01) (Photorhabdus luminescens subsp. laumondii) protein is 3-ketoacyl-CoA thiolase.